A 316-amino-acid polypeptide reads, in one-letter code: Peroxisomal targeting signal 2 receptor (316 aa).

WD repeat units lie at residues 56–96, 102–142, 145–185, 188–228, 232–272, and 277–316; these read DTRD…GGRP, EHTK…SLKT, EHRY…SLNT, AHDH…RPTT, GHTY…DPII, and HHTEFVVGLDWNMFIDGQMASCSWDEQVCVWNLGRPGQFR.

Belongs to the WD repeat peroxin-7 family. In terms of assembly, interacts with PEX5; interaction only takes place when PEX7 is associated with cargo proteins.

It localises to the cytoplasm. It is found in the cytosol. Its subcellular location is the peroxisome matrix. Receptor required for the peroxisomal import of proteins containing a C-terminal PTS2-type peroxisomal targeting signal. Specifically binds to cargo proteins containing a PTS2 peroxisomal targeting signal in the cytosol. Cargo protein-binding triggers interaction with PEX5 and formation of a ternary complex composed of PEX5 and PEX7 along with PTS2-containing cargo proteins, which is tranlocated into peroxisomes by passing through the PEX13-PEX14 docking complex. The polypeptide is Peroxisomal targeting signal 2 receptor (pex7) (Dictyostelium discoideum (Social amoeba)).